The chain runs to 127 residues: Protein chibby homolog 1 (127 aa).

Residues 1–25 (MPLFGSIFSPKKTPPRKSASLSNLH) are disordered. Residues serine 9 and serine 20 each carry the phosphoserine modification. The interval 60 to 112 (VADSVISGGVDRRETQRLRKRNQQLEEENNLLRLKVDILLDMLSETTAESHLK) is minimal region for the interaction with PKD2. Positions 68–110 (GVDRRETQRLRKRNQQLEEENNLLRLKVDILLDMLSETTAESH) form a coiled coil. Positions 77-98 (LRKRNQQLEEENNLLRLKVDIL) are leucine-zipper; mediates homodimerization.

The protein belongs to the chibby family. As to quaternary structure, homodimer. Homodimerization is essential for nuclear localization and interaction with KPNA4 but is dispensable for interaction with CTNNB1. Interacts with polycystin-2/PKD2 and GM130. Interacts with the C-terminal region of CTNNB1. Interacts (C-terminus) with TCIM (C-terminus), TCIM competes with CTNNB1 for the interaction with CBY1. Interacts with FAM92A; this interaction facilitates targeting of FAM92A to cilium basal body. Interacts with CIBAR2. Interacts with KPNA4.

The protein localises to the nucleus speckle. It is found in the cytoplasm. Its subcellular location is the cytoskeleton. It localises to the cilium basal body. The protein resides in the microtubule organizing center. The protein localises to the centrosome. It is found in the centriole. Its subcellular location is the golgi apparatus. It localises to the trans-Golgi network. The protein resides in the cell projection. The protein localises to the cilium. It is found in the flagellum. Its subcellular location is the nucleus. In terms of biological role, inhibits the Wnt/Wingless pathway by binding to CTNNB1/beta-catenin and inhibiting beta-catenin-mediated transcriptional activation through competition with TCF/LEF transcription factors. Has also been shown to play a role in regulating the intracellular trafficking of polycystin-2/PKD2 and possibly of other intracellular proteins. Promotes adipocyte and cardiomyocyte differentiation. The sequence is that of Protein chibby homolog 1 (Cby1) from Rattus norvegicus (Rat).